Reading from the N-terminus, the 67-residue chain is Alpha-toxin Cn12 (67 aa).

One can recognise an LCN-type CS-alpha/beta domain in the interval arginine 1 to arginine 66. Intrachain disulfides connect cysteine 11/cysteine 65, cysteine 15/cysteine 40, cysteine 25/cysteine 45, and cysteine 29/cysteine 47.

As to expression, expressed by the venom gland.

The protein resides in the secreted. In terms of biological role, alpha toxins bind voltage-independently at site-3 of sodium channels (Nav) and inhibit the inactivation of the activated channels, thereby blocking neuronal transmission. This toxin binds, in vitro, to sodium channels and inhibits the inactivation of the activated channels. Seems not toxic to mice, crickets and sweet-water shrimps. The sequence is that of Alpha-toxin Cn12 from Centruroides noxius (Mexican scorpion).